Reading from the N-terminus, the 467-residue chain is Probable receptor-like protein kinase At3g17420 (467 aa).

The signal sequence occupies residues methionine 1–valine 35. The Extracellular segment spans residues leucine 36–alanine 123. Asparagine 50 carries N-linked (GlcNAc...) asparagine glycosylation. Position 70 is a phosphoserine (serine 70). An N-linked (GlcNAc...) asparagine glycan is attached at asparagine 79. The segment at glycine 102 to proline 126 is disordered. The helical transmembrane segment at proline 124–leucine 144 threads the bilayer. Residues arginine 145–isoleucine 467 are Cytoplasmic-facing. One can recognise a Protein kinase domain in the interval phenylalanine 154–methionine 433. ATP is bound by residues isoleucine 160–valine 168 and lysine 182. Tyrosine 227 carries the phosphotyrosine modification. Aspartate 280 serves as the catalytic Proton acceptor. Phosphoserine occurs at positions 284 and 313. A phosphothreonine mark is found at threonine 314 and threonine 319. The residue at position 327 (tyrosine 327) is a Phosphotyrosine. Residues aspartate 413 to isoleucine 467 are disordered. Positions glutamate 447–isoleucine 467 are enriched in basic and acidic residues.

The protein belongs to the protein kinase superfamily. Ser/Thr protein kinase family.

Its subcellular location is the cell membrane. It catalyses the reaction L-seryl-[protein] + ATP = O-phospho-L-seryl-[protein] + ADP + H(+). It carries out the reaction L-threonyl-[protein] + ATP = O-phospho-L-threonyl-[protein] + ADP + H(+). This is Probable receptor-like protein kinase At3g17420 from Arabidopsis thaliana (Mouse-ear cress).